The chain runs to 179 residues: Large ribosomal subunit protein uL6 (179 aa).

It belongs to the universal ribosomal protein uL6 family. Part of the 50S ribosomal subunit.

This protein binds to the 23S rRNA, and is important in its secondary structure. It is located near the subunit interface in the base of the L7/L12 stalk, and near the tRNA binding site of the peptidyltransferase center. This Bifidobacterium animalis subsp. lactis (strain AD011) protein is Large ribosomal subunit protein uL6.